The following is a 174-amino-acid chain: Protein PopB (174 aa).

Positions 1-174 are disordered; the sequence is MSHSKIKAGG…EAMKIKDDDD (174 aa). Positions 50 to 65 are enriched in polar residues; that stretch reads LNKSNLGSDSQTWTPG. The span at 66–78 shows a compositional bias: low complexity; that stretch reads STMVSLKSRSSSS. Over residues 79–89 the composition is skewed to basic and acidic residues; it reads HKPDTGGDTKP. Residues 147-161 are compositionally biased toward low complexity; sequence IALQRAIQRQTQTRQ. Residues 162–174 show a composition bias toward basic and acidic residues; sequence KMQEAMKIKDDDD.

It is found in the secreted. Its function is as follows. Probably involved in host-pathogen interactions. In Ralstonia nicotianae (strain ATCC BAA-1114 / GMI1000) (Ralstonia solanacearum), this protein is Protein PopB (popB).